Consider the following 175-residue polypeptide: MITVLRLDHRLGRDTRITTHVCLTARAFGADKVILSGEHDKHIIESAQKVVENWGGDFEVEYQKAYRPVIKEHKQKGFEIIHLTMYGKHVEDVVPTIRDNNRDKLIIVGGSRVPTDVYEAADWNLSVTNQPHSEVAALAICLHYMMDGSELKTVYDDGKMQIVPNNEHKEVIKNE.

Leu83 contacts S-adenosyl-L-methionine.

It belongs to the aTrm56 family. As to quaternary structure, homodimer.

Its subcellular location is the cytoplasm. It carries out the reaction cytidine(56) in tRNA + S-adenosyl-L-methionine = 2'-O-methylcytidine(56) in tRNA + S-adenosyl-L-homocysteine + H(+). Its function is as follows. Specifically catalyzes the AdoMet-dependent 2'-O-ribose methylation of cytidine at position 56 in tRNAs. The polypeptide is tRNA (cytidine(56)-2'-O)-methyltransferase (Methanosphaera stadtmanae (strain ATCC 43021 / DSM 3091 / JCM 11832 / MCB-3)).